Here is an 89-residue protein sequence, read N- to C-terminus: Small ribosomal subunit protein uS14 (89 aa).

It belongs to the universal ribosomal protein uS14 family. Part of the 30S ribosomal subunit. Contacts proteins S3 and S10.

Functionally, binds 16S rRNA, required for the assembly of 30S particles and may also be responsible for determining the conformation of the 16S rRNA at the A site. This is Small ribosomal subunit protein uS14 from Pelodictyon phaeoclathratiforme (strain DSM 5477 / BU-1).